The chain runs to 140 residues: Nucleoside diphosphate kinase (140 aa).

6 residues coordinate ATP: Lys-11, Phe-59, Arg-87, Thr-93, Arg-104, and Asn-114. His-117 serves as the catalytic Pros-phosphohistidine intermediate.

It belongs to the NDK family. As to quaternary structure, homotetramer. It depends on Mg(2+) as a cofactor.

Its subcellular location is the cytoplasm. The enzyme catalyses a 2'-deoxyribonucleoside 5'-diphosphate + ATP = a 2'-deoxyribonucleoside 5'-triphosphate + ADP. The catalysed reaction is a ribonucleoside 5'-diphosphate + ATP = a ribonucleoside 5'-triphosphate + ADP. Functionally, major role in the synthesis of nucleoside triphosphates other than ATP. The ATP gamma phosphate is transferred to the NDP beta phosphate via a ping-pong mechanism, using a phosphorylated active-site intermediate. The protein is Nucleoside diphosphate kinase of Rhodopseudomonas palustris (strain BisA53).